The chain runs to 227 residues: Cytochrome c oxidase subunit 2 (227 aa).

The Mitochondrial intermembrane segment spans residues 1-14 (MAYPFQLGFQDAAS). A helical transmembrane segment spans residues 15 to 45 (PIMEELLHFHDHTLMIVFLISSLVLYIITLM). At 46-59 (LTTKLTHTSTMDAQ) the chain is on the mitochondrial matrix side. Residues 60–87 (EVETVWTILPAIILILIALPSLRILYMM) form a helical membrane-spanning segment. The Mitochondrial intermembrane segment spans residues 88 to 227 (DEVNNPSLTV…VFEKWSVSML (140 aa)). Positions 161, 196, 198, 200, 204, and 207 each coordinate Cu cation. Glutamate 198 contributes to the Mg(2+) binding site.

Belongs to the cytochrome c oxidase subunit 2 family. As to quaternary structure, component of the cytochrome c oxidase (complex IV, CIV), a multisubunit enzyme composed of 14 subunits. The complex is composed of a catalytic core of 3 subunits MT-CO1, MT-CO2 and MT-CO3, encoded in the mitochondrial DNA, and 11 supernumerary subunits COX4I, COX5A, COX5B, COX6A, COX6B, COX6C, COX7A, COX7B, COX7C, COX8 and NDUFA4, which are encoded in the nuclear genome. The complex exists as a monomer or a dimer and forms supercomplexes (SCs) in the inner mitochondrial membrane with NADH-ubiquinone oxidoreductase (complex I, CI) and ubiquinol-cytochrome c oxidoreductase (cytochrome b-c1 complex, complex III, CIII), resulting in different assemblies (supercomplex SCI(1)III(2)IV(1) and megacomplex MCI(2)III(2)IV(2)). Found in a complex with TMEM177, COA6, COX18, COX20, SCO1 and SCO2. Interacts with TMEM177 in a COX20-dependent manner. Interacts with COX20. Interacts with COX16. The cofactor is Cu cation.

The protein localises to the mitochondrion inner membrane. The catalysed reaction is 4 Fe(II)-[cytochrome c] + O2 + 8 H(+)(in) = 4 Fe(III)-[cytochrome c] + 2 H2O + 4 H(+)(out). Component of the cytochrome c oxidase, the last enzyme in the mitochondrial electron transport chain which drives oxidative phosphorylation. The respiratory chain contains 3 multisubunit complexes succinate dehydrogenase (complex II, CII), ubiquinol-cytochrome c oxidoreductase (cytochrome b-c1 complex, complex III, CIII) and cytochrome c oxidase (complex IV, CIV), that cooperate to transfer electrons derived from NADH and succinate to molecular oxygen, creating an electrochemical gradient over the inner membrane that drives transmembrane transport and the ATP synthase. Cytochrome c oxidase is the component of the respiratory chain that catalyzes the reduction of oxygen to water. Electrons originating from reduced cytochrome c in the intermembrane space (IMS) are transferred via the dinuclear copper A center (CU(A)) of subunit 2 and heme A of subunit 1 to the active site in subunit 1, a binuclear center (BNC) formed by heme A3 and copper B (CU(B)). The BNC reduces molecular oxygen to 2 water molecules using 4 electrons from cytochrome c in the IMS and 4 protons from the mitochondrial matrix. This is Cytochrome c oxidase subunit 2 (MT-CO2) from Balaenoptera physalus (Fin whale).